The chain runs to 586 residues: MAATRNLSLLAQSSQPWAGIYGSHGSPRPISSWLRRQSIAKTSYICMCTPLSMSQLIATPLITDIESLLKYLRQPQVLPHEIDDSTKRRELLERTRRELQTTLEPLQAMKMIDTLQRLGLAYHFEDDINSLLTGFSNGQPDEDLLTASLRFRLLRHNGHRINPNIFQKFMDKQGKFIDSLKEDTRGLFSLYEASYLGANGEDILLQALEFTKAHLKESLPSLAPPLAKKVSQALELPRHRRMARLEARRYIEEYGGENGHSPDLLELAKLDYNKVQSLHQLELSEISRWWKQLGLVDKLTFARDRPLECFLWTVGILPEPKYSSCRIELAKTIAILLVIDDIFDTHGTLDELILFTNAIRRWDLEAMEDLPEYMRICYMALYNTTNEICYKILKQNGWSVLPYLKATWIDMIEGFMLEASWLNTGYVPNMEEYVENGVTTAGAYMALVHLFFLIGQGVTEENVKLLVKPYPKLFSYSGRILRLWDDLGTAKEEQERGDLASSIDLFMRENNITSDEEGRKCILKIIDNLWKELNGELVSRHALPLAIIKAAFNMARASQVVYQHEEDSYFSSVDNYVQALFFTPFN.

The transit peptide at 1-47 directs the protein to the chloroplast; sequence MAATRNLSLLAQSSQPWAGIYGSHGSPRPISSWLRRQSIAKTSYICM. D340, D344, D485, T489, and E493 together coordinate Mg(2+). Residues 340–344 carry the DDXXD motif motif; sequence DDIFD.

Belongs to the terpene synthase family. Tpsg subfamily. Monomer. Mg(2+) is required as a cofactor.

It is found in the plastid. The protein resides in the chloroplast. The catalysed reaction is (2E)-geranyl diphosphate + H2O = (2E)-geraniol + diphosphate. The protein operates within secondary metabolite biosynthesis; terpenoid biosynthesis. In terms of biological role, monoterpene synthase involved in the biosynthesis of volatile organic compounds. Mediates the conversion of (2E)-geranyl diphosphate (GPP) into the acyclic monoterpene, geraniol. Does not use (2E,6E)-farnesyl diphosphate (FPP) as substrate. This Cananga odorata (Ylang-ylang tree) protein is Monoterpene synthase TPS4, chloroplastic.